We begin with the raw amino-acid sequence, 158 residues long: Dysbindin domain-containing protein 1 (158 aa).

Positions 1–38 (MEPSEGASPGGLVKEVDMPQAALSAPVPVTGTSGQSPM) are disordered. Phosphoserine occurs at positions 95 and 119. Residues 96-158 (DDENVASDSH…ILTVERPKED (63 aa)) form a disordered region. The segment covering 125–141 (TRAEQNREKQPFGDPER) has biased composition (basic and acidic residues).

This sequence belongs to the dysbindin family.

In Bos taurus (Bovine), this protein is Dysbindin domain-containing protein 1 (DBNDD1).